We begin with the raw amino-acid sequence, 72 residues long: Translation initiation factor IF-1 (72 aa).

The region spanning 1-72 (MSKDDCIEFE…TKGRIIYRMK (72 aa)) is the S1-like domain.

It belongs to the IF-1 family. Component of the 30S ribosomal translation pre-initiation complex which assembles on the 30S ribosome in the order IF-2 and IF-3, IF-1 and N-formylmethionyl-tRNA(fMet); mRNA recruitment can occur at any time during PIC assembly.

It localises to the cytoplasm. In terms of biological role, one of the essential components for the initiation of protein synthesis. Stabilizes the binding of IF-2 and IF-3 on the 30S subunit to which N-formylmethionyl-tRNA(fMet) subsequently binds. Helps modulate mRNA selection, yielding the 30S pre-initiation complex (PIC). Upon addition of the 50S ribosomal subunit IF-1, IF-2 and IF-3 are released leaving the mature 70S translation initiation complex. This is Translation initiation factor IF-1 from Xylella fastidiosa (strain Temecula1 / ATCC 700964).